Consider the following 87-residue polypeptide: Putative phytosulfokines 4 (87 aa).

Residues 1–23 (MANLSTLITIALLLCATMLTCSA) form the signal peptide. Positions 24 to 77 (RPEPAYFASFTTSPADTLSLEMIESKLHEVAGESCDKEDDEDCLVRRTLTAHLD) are excised as a propeptide. Sulfotyrosine occurs at positions 78 and 80. Residues 83–87 (KNNHH) constitute a propeptide that is removed on maturation.

This sequence belongs to the phytosulfokine family. In terms of processing, sulfation is important for activity and for the binding to a putative membrane receptor.

The protein localises to the secreted. In terms of biological role, promotes plant cell differentiation, organogenesis and somatic embryogenesis as well as cell proliferation. The chain is Putative phytosulfokines 4 (PSK4) from Arabidopsis thaliana (Mouse-ear cress).